A 394-amino-acid chain; its full sequence is MLITVYCVRRDLSEVTFSLEVDGDFELENFRALCELESGIPASETLIVYAERPLTNNQRSLASYGLKDGDVVILRQRETPEARPAAPFPGLDFSTIAVPGSSSQPAPSQPQAPPPPPPDTSSFPQGLDNPALLREMLLANPHELSLLKERNPPLAEALLSGDLEKFTKVLLEQQQERARREQERIRLYSADPFDLEAQAKIEEDIRQQNIEENMTIAMEEAPESFGQVVMLYINCKVNGYPVKAFVDSGAQMTIMSQACAERCHIMRLVDRRWAGIAKGVGTQKIIGRVHLAQVQIEGDFLPCSFSILEEQPMDMLLGLDMLKRHQCSIDLEKNVLVIGTTGTRTSFLPEGELPECARLAYGPGREEVRPEEIADRELAEVLQKSAEEADQQKP.

One can recognise a Ubiquitin-like domain in the interval 1 to 81 (MLITVYCVRR…VILRQRETPE (81 aa)). The tract at residues 82 to 128 (ARPAAPFPGLDFSTIAVPGSSSQPAPSQPQAPPPPPPDTSSFPQGLD) is disordered. Pro residues predominate over residues 107–119 (PSQPQAPPPPPPD). Residue D247 is part of the active site. A Ubiquitin-binding motif is present at residues 371–390 (EEIADRELAEVLQKSAEEAD).

It belongs to the DDI1 family. In terms of assembly, homodimer.

The protein resides in the cytoplasm. The protein localises to the cytosol. Its subcellular location is the chromosome. Aspartic protease that mediates the cleavage of NFE2L1/NRF1 at 'Leu-104', thereby promoting release of NFE2L1/NRF1 from the endoplasmic reticulum membrane. Ubiquitination of NFE2L1/NRF1 is a prerequisite for cleavage, suggesting that DDI2 specifically recognizes and binds ubiquitinated NFE2L1/NRF1. Seems to act as a proteasomal shuttle which links the proteasome and replication fork proteins like RTF2. Required for cellular survival following replication stress. The protein is Protein DDI1 homolog 2 (ddi2) of Xenopus tropicalis (Western clawed frog).